Reading from the N-terminus, the 312-residue chain is tRNA pseudouridine synthase B (312 aa).

Catalysis depends on aspartate 37, which acts as the Nucleophile.

It belongs to the pseudouridine synthase TruB family. Type 1 subfamily.

The catalysed reaction is uridine(55) in tRNA = pseudouridine(55) in tRNA. In terms of biological role, responsible for synthesis of pseudouridine from uracil-55 in the psi GC loop of transfer RNAs. This chain is tRNA pseudouridine synthase B, found in Deinococcus geothermalis (strain DSM 11300 / CIP 105573 / AG-3a).